A 142-amino-acid polypeptide reads, in one-letter code: Large ribosomal subunit protein uL13 (142 aa).

The protein belongs to the universal ribosomal protein uL13 family. In terms of assembly, part of the 50S ribosomal subunit.

Functionally, this protein is one of the early assembly proteins of the 50S ribosomal subunit, although it is not seen to bind rRNA by itself. It is important during the early stages of 50S assembly. The sequence is that of Large ribosomal subunit protein uL13 from Stenotrophomonas maltophilia (strain K279a).